Here is a 312-residue protein sequence, read N- to C-terminus: Malate dehydrogenase (312 aa).

NAD(+) is bound by residues 7-13 (GAAGGIG) and D34. R81 and R87 together coordinate substrate. NAD(+)-binding positions include N94 and 117–119 (ITN). Residues N119 and R153 each contribute to the substrate site. The Proton acceptor role is filled by H177. M227 provides a ligand contact to NAD(+).

Belongs to the LDH/MDH superfamily. MDH type 1 family. In terms of assembly, homodimer.

The catalysed reaction is (S)-malate + NAD(+) = oxaloacetate + NADH + H(+). In terms of biological role, catalyzes the reversible oxidation of malate to oxaloacetate. The protein is Malate dehydrogenase (mdh) of Moritella sp. (strain 2D2).